We begin with the raw amino-acid sequence, 339 residues long: NADH-quinone oxidoreductase subunit H (339 aa).

9 consecutive transmembrane segments (helical) span residues 9-29 (IFPL…LILC), 50-70 (PNVV…KLLF), 82-102 (ILFI…WAVI), 115-135 (VGVL…IIAG), 161-181 (MGLV…SEII), 187-207 (MPWW…ISVL), 235-255 (MGFA…SAMT), 275-295 (IPGF…FLWI), and 311-331 (GWKV…SVLV).

This sequence belongs to the complex I subunit 1 family. In terms of assembly, NDH-1 is composed of 14 different subunits. Subunits NuoA, H, J, K, L, M, N constitute the membrane sector of the complex.

The protein localises to the cell membrane. The enzyme catalyses a quinone + NADH + 5 H(+)(in) = a quinol + NAD(+) + 4 H(+)(out). Its function is as follows. NDH-1 shuttles electrons from NADH, via FMN and iron-sulfur (Fe-S) centers, to quinones in the respiratory chain. The immediate electron acceptor for the enzyme in this species is believed to be ubiquinone. Couples the redox reaction to proton translocation (for every two electrons transferred, four hydrogen ions are translocated across the cytoplasmic membrane), and thus conserves the redox energy in a proton gradient. This subunit may bind ubiquinone. The polypeptide is NADH-quinone oxidoreductase subunit H (Rickettsia africae (strain ESF-5)).